Consider the following 94-residue polypeptide: Integration host factor subunit beta (94 aa).

It belongs to the bacterial histone-like protein family. As to quaternary structure, heterodimer of an alpha and a beta chain.

Its function is as follows. This protein is one of the two subunits of integration host factor, a specific DNA-binding protein that functions in genetic recombination as well as in transcriptional and translational control. The polypeptide is Integration host factor subunit beta (Photorhabdus laumondii subsp. laumondii (strain DSM 15139 / CIP 105565 / TT01) (Photorhabdus luminescens subsp. laumondii)).